Consider the following 95-residue polypeptide: Large ribosomal subunit protein uL23 (95 aa).

The protein belongs to the universal ribosomal protein uL23 family. As to quaternary structure, part of the 50S ribosomal subunit. Contacts protein L29, and trigger factor when it is bound to the ribosome.

Functionally, one of the early assembly proteins it binds 23S rRNA. One of the proteins that surrounds the polypeptide exit tunnel on the outside of the ribosome. Forms the main docking site for trigger factor binding to the ribosome. In Coxiella burnetii (strain CbuK_Q154) (Coxiella burnetii (strain Q154)), this protein is Large ribosomal subunit protein uL23.